The primary structure comprises 384 residues: MNKSDSFYNLETIGGILLFIAAVLAIITANSPYRVGYEYFLSINGSVSVGNMSITKPLLLWINDGLMAIYFLLIGLEIKREVNRGILSDKTNLLVPALTALAGLLFPALIFIFFNAHHPVYLKGWAIPTATDIAFTLGIVSLLGSRVPFSLKILLTAIAIFDDIAAIVIIALFYTEQLSLLSLSLALVFTLILIGLNYFKCRRISVFMLFGVALWIAVLKSGVHATLAGIVIAMTIPDEGKESMLTRLEDGLHHWVVFLILPLFAFANAGVSFVGLDASMLTHPVVLGIGLGLFLGKQLGIFLSLGYFVQFKKFLKADKVNLAQVYGIALICGVGFTMSLFIGSLAYQNYDLSLMPMVKIGVVFGSFIAGLTGFLVLKMTSLKR.

11 consecutive transmembrane segments (helical) span residues 7–27 (FYNL…LAII), 58–78 (LLLW…GLEI), 94–114 (LVPA…FIFF), 124–144 (GWAI…SLLG), 153–173 (ILLT…IALF), 179–199 (SLLS…LNYF), 204–224 (ISVF…SGVH), 256–276 (VVFL…FVGL), 285–305 (VVLG…FLSL), 325–345 (VYGI…IGSL), and 357–377 (MVKI…FLVL).

Belongs to the NhaA Na(+)/H(+) (TC 2.A.33) antiporter family.

It localises to the cell inner membrane. It carries out the reaction Na(+)(in) + 2 H(+)(out) = Na(+)(out) + 2 H(+)(in). In terms of biological role, na(+)/H(+) antiporter that extrudes sodium in exchange for external protons. The chain is Na(+)/H(+) antiporter NhaA from Legionella pneumophila (strain Corby).